Consider the following 483-residue polypeptide: Protein nucleotidyltransferase YdiU (483 aa).

ATP-binding residues include glycine 100, glycine 102, arginine 103, lysine 123, aspartate 135, glycine 136, arginine 189, and arginine 196. The active-site Proton acceptor is aspartate 265. Mg(2+)-binding residues include asparagine 266 and aspartate 275. Aspartate 275 contacts ATP.

The protein belongs to the SELO family. Mg(2+) serves as cofactor. The cofactor is Mn(2+).

The enzyme catalyses L-seryl-[protein] + ATP = 3-O-(5'-adenylyl)-L-seryl-[protein] + diphosphate. It carries out the reaction L-threonyl-[protein] + ATP = 3-O-(5'-adenylyl)-L-threonyl-[protein] + diphosphate. It catalyses the reaction L-tyrosyl-[protein] + ATP = O-(5'-adenylyl)-L-tyrosyl-[protein] + diphosphate. The catalysed reaction is L-histidyl-[protein] + UTP = N(tele)-(5'-uridylyl)-L-histidyl-[protein] + diphosphate. The enzyme catalyses L-seryl-[protein] + UTP = O-(5'-uridylyl)-L-seryl-[protein] + diphosphate. It carries out the reaction L-tyrosyl-[protein] + UTP = O-(5'-uridylyl)-L-tyrosyl-[protein] + diphosphate. Functionally, nucleotidyltransferase involved in the post-translational modification of proteins. It can catalyze the addition of adenosine monophosphate (AMP) or uridine monophosphate (UMP) to a protein, resulting in modifications known as AMPylation and UMPylation. This is Protein nucleotidyltransferase YdiU from Gloeobacter violaceus (strain ATCC 29082 / PCC 7421).